Consider the following 108-residue polypeptide: Parvalbumin beta 2 (108 aa).

A1 is subject to N-acetylalanine. EF-hand domains are found at residues K38 to G73 and L77 to G108. Ca(2+) contacts are provided by D51, D53, S55, F57, E59, E62, D90, D92, D94, K96, and E101.

This sequence belongs to the parvalbumin family.

In terms of biological role, in muscle, parvalbumin is thought to be involved in relaxation after contraction. It binds two calcium ions. This chain is Parvalbumin beta 2, found in Merluccius bilinearis (Silver hake).